We begin with the raw amino-acid sequence, 21 residues long: Hemocyanin subunit 4 (21 aa).

It belongs to the tyrosinase family. Hemocyanin subfamily. In terms of tissue distribution, hemolymph.

Its subcellular location is the secreted. It localises to the extracellular space. Functionally, hemocyanins are copper-containing oxygen carriers occurring freely dissolved in the hemolymph of many mollusks and arthropods. This is Hemocyanin subunit 4 from Maja squinado (Mediterranean spider crab).